Consider the following 669-residue polypeptide: DNA ligase (669 aa).

NAD(+)-binding positions include 34–38 (DAEYD), 83–84 (SL), and Glu114. Residue Lys116 is the N6-AMP-lysine intermediate of the active site. 4 residues coordinate NAD(+): Arg137, Glu171, Lys287, and Lys311. Residues Cys405, Cys408, Cys423, and Cys428 each coordinate Zn(2+). The region spanning 591–669 (NVESYFAGKT…EERFLQELNK (79 aa)) is the BRCT domain.

The protein belongs to the NAD-dependent DNA ligase family. LigA subfamily. Mg(2+) is required as a cofactor. The cofactor is Mn(2+).

The catalysed reaction is NAD(+) + (deoxyribonucleotide)n-3'-hydroxyl + 5'-phospho-(deoxyribonucleotide)m = (deoxyribonucleotide)n+m + AMP + beta-nicotinamide D-nucleotide.. Its function is as follows. DNA ligase that catalyzes the formation of phosphodiester linkages between 5'-phosphoryl and 3'-hydroxyl groups in double-stranded DNA using NAD as a coenzyme and as the energy source for the reaction. It is essential for DNA replication and repair of damaged DNA. This is DNA ligase from Bacillus cereus (strain G9842).